Here is a 328-residue protein sequence, read N- to C-terminus: Acetaldehyde dehydrogenase 3 (328 aa).

17 to 20 lines the NAD(+) pocket; the sequence is SGNI. Catalysis depends on Cys135, which acts as the Acyl-thioester intermediate. NAD(+) is bound by residues 166-174 and Asn298; that span reads SAGPGTRAN.

It belongs to the acetaldehyde dehydrogenase family.

It carries out the reaction acetaldehyde + NAD(+) + CoA = acetyl-CoA + NADH + H(+). This Nocardia farcinica (strain IFM 10152) protein is Acetaldehyde dehydrogenase 3.